A 177-amino-acid chain; its full sequence is Large ribosomal subunit protein uL6 (177 aa).

Belongs to the universal ribosomal protein uL6 family. Part of the 50S ribosomal subunit.

Its function is as follows. This protein binds to the 23S rRNA, and is important in its secondary structure. It is located near the subunit interface in the base of the L7/L12 stalk, and near the tRNA binding site of the peptidyltransferase center. This is Large ribosomal subunit protein uL6 from Haemophilus ducreyi (strain 35000HP / ATCC 700724).